Here is a 1453-residue protein sequence, read N- to C-terminus: ABC transporter G family member 34 (1453 aa).

A disordered region spans residues 1-24 (MLGRDEDLVRTMSGRGSLGSTSHR). The region spanning 173–446 (LGLFHLLPSK…FEYMGFKCPE (274 aa)) is the ABC transporter 1 domain. 206–213 (GPPSSGKT) contacts ATP. The ABC transmembrane type-2 1 domain maps to 524-737 (DLFKACFDRE…GQTALVINEF (214 aa)). 6 helical membrane-spanning segments follow: residues 542 to 562 (FVYV…MTVY), 582 to 602 (LFFS…FTVM), 621 to 641 (FALP…VIWI), 661 to 681 (LLAY…LGAL), 687 to 707 (IANS…GFII), and 773 to 793 (FWIC…CYII). The ABC transporter 2 domain maps to 852 to 1105 (LAFNNVNYYV…LVEYFEAIEG (254 aa)). An ATP-binding site is contributed by 897–904 (GVSGAGKT). The ABC transmembrane type-2 2 domain occupies 1177-1391 (TQTKACFWKM…TLYGIITSQV (215 aa)). 7 helical membrane-spanning segments follow: residues 1196–1216 (YNAI…LLFW), 1230–1250 (NFFG…AATV), 1289–1309 (IQTG…WTVV), 1311–1331 (FFWF…YGMM), 1341–1361 (IAGI…GFLI), 1366–1386 (IPIW…LYGI), and 1422–1442 (FLPV…FAFA).

It belongs to the ABC transporter superfamily. ABCG family. PDR (TC 3.A.1.205) subfamily. In terms of tissue distribution, expressed in roots at low levels.

It localises to the membrane. Its function is as follows. May be a general defense protein. The chain is ABC transporter G family member 34 (ABCG34) from Arabidopsis thaliana (Mouse-ear cress).